The sequence spans 183 residues: Thioredoxin/glutathione peroxidase BtuE (183 aa).

Cysteine 37 is a catalytic residue.

The protein belongs to the glutathione peroxidase family. BtuE subfamily.

Its subcellular location is the periplasm. The catalysed reaction is 2 glutathione + H2O2 = glutathione disulfide + 2 H2O. The enzyme catalyses a hydroperoxide + [thioredoxin]-dithiol = an alcohol + [thioredoxin]-disulfide + H2O. Non-specific peroxidase that can use thioredoxin or glutathione as a reducing agent. In vitro, utilizes preferentially thioredoxin A to decompose hydrogen peroxide as well as cumene-, tert-butyl-, and linoleic acid hydroperoxides, suggesting that it may have one or more organic hydroperoxide as its physiological substrate. The chain is Thioredoxin/glutathione peroxidase BtuE from Escherichia coli (strain K12).